A 459-amino-acid chain; its full sequence is Putrescine aminotransferase (459 aa).

Pyridoxal 5'-phosphate contacts are provided by residues 150 to 151 (GT) and Q274. K300 bears the N6-(pyridoxal phosphate)lysine mark. Residue T332 participates in pyridoxal 5'-phosphate binding.

Belongs to the class-III pyridoxal-phosphate-dependent aminotransferase family. Putrescine aminotransferase subfamily. Requires pyridoxal 5'-phosphate as cofactor.

It carries out the reaction an alkane-alpha,omega-diamine + 2-oxoglutarate = an omega-aminoaldehyde + L-glutamate. The catalysed reaction is putrescine + 2-oxoglutarate = 1-pyrroline + L-glutamate + H2O. It catalyses the reaction cadaverine + 2-oxoglutarate = 5-aminopentanal + L-glutamate. The protein operates within amine and polyamine degradation; putrescine degradation; 4-aminobutanal from putrescine (transaminase route): step 1/1. In terms of biological role, catalyzes the aminotransferase reaction from putrescine to 2-oxoglutarate, leading to glutamate and 4-aminobutanal, which spontaneously cyclizes to form 1-pyrroline. This is the first step in one of two pathways for putrescine degradation, where putrescine is converted into 4-aminobutanoate (gamma-aminobutyrate or GABA) via 4-aminobutanal. Also functions as a cadaverine transaminase in a a L-lysine degradation pathway to succinate that proceeds via cadaverine, glutarate and L-2-hydroxyglutarate. The chain is Putrescine aminotransferase from Escherichia coli O8 (strain IAI1).